A 157-amino-acid polypeptide reads, in one-letter code: Transcriptional repressor NrdR (157 aa).

Residues 3–34 fold into a zinc finger; it reads CPFCNTVDTKVIDSRLVSEGSQIKRRRQCAIC. The ATP-cone domain maps to 49-139; the sequence is PRVIKNDDLL…VYRSFEDVRE (91 aa).

The protein belongs to the NrdR family. It depends on Zn(2+) as a cofactor.

In terms of biological role, negatively regulates transcription of bacterial ribonucleotide reductase nrd genes and operons by binding to NrdR-boxes. This is Transcriptional repressor NrdR from Hamiltonella defensa subsp. Acyrthosiphon pisum (strain 5AT).